A 506-amino-acid polypeptide reads, in one-letter code: Histidine--tRNA ligase, mitochondrial (506 aa).

The N-terminal 33 residues, 1 to 33, are a transit peptide targeting the mitochondrion; that stretch reads MPQLGLLPGRAWTVLLGLLRPPPGALCIRAVRS. S67 is modified (phosphoserine). Residues 131 to 133, R158, Q174, D178, R327, and 331 to 332 contribute to the L-histidine site; these read DLT and YY. K444 is modified (N6-acetyllysine).

The protein belongs to the class-II aminoacyl-tRNA synthetase family. Homodimer.

Its subcellular location is the mitochondrion. The enzyme catalyses tRNA(His) + L-histidine + ATP = L-histidyl-tRNA(His) + AMP + diphosphate + H(+). Mitochondrial aminoacyl-tRNA synthetase that catalyzes the ATP-dependent ligation of histidine to the 3'-end of its cognate tRNA, via the formation of an aminoacyl-adenylate intermediate (His-AMP). The sequence is that of Histidine--tRNA ligase, mitochondrial (HARS2) from Bos taurus (Bovine).